The sequence spans 344 residues: N-acetyl-gamma-glutamyl-phosphate reductase 1 (344 aa).

Cysteine 150 is an active-site residue.

It belongs to the NAGSA dehydrogenase family. Type 1 subfamily.

It is found in the cytoplasm. It carries out the reaction N-acetyl-L-glutamate 5-semialdehyde + phosphate + NADP(+) = N-acetyl-L-glutamyl 5-phosphate + NADPH + H(+). It functions in the pathway amino-acid biosynthesis; L-arginine biosynthesis; N(2)-acetyl-L-ornithine from L-glutamate: step 3/4. Functionally, catalyzes the NADPH-dependent reduction of N-acetyl-5-glutamyl phosphate to yield N-acetyl-L-glutamate 5-semialdehyde. The protein is N-acetyl-gamma-glutamyl-phosphate reductase 1 of Pseudomonas putida (strain ATCC 47054 / DSM 6125 / CFBP 8728 / NCIMB 11950 / KT2440).